Reading from the N-terminus, the 346-residue chain is Protein RecA (346 aa).

Position 64–71 (64–71 (GPESSGKT)) interacts with ATP.

It belongs to the RecA family.

The protein localises to the cytoplasm. Can catalyze the hydrolysis of ATP in the presence of single-stranded DNA, the ATP-dependent uptake of single-stranded DNA by duplex DNA, and the ATP-dependent hybridization of homologous single-stranded DNAs. It interacts with LexA causing its activation and leading to its autocatalytic cleavage. The polypeptide is Protein RecA (Bacillus pumilus (strain SAFR-032)).